Reading from the N-terminus, the 313-residue chain is Porphobilinogen deaminase (313 aa).

Residue Cys242 is modified to S-(dipyrrolylmethanemethyl)cysteine.

It belongs to the HMBS family. Monomer. The cofactor is dipyrromethane.

It carries out the reaction 4 porphobilinogen + H2O = hydroxymethylbilane + 4 NH4(+). Its pathway is porphyrin-containing compound metabolism; protoporphyrin-IX biosynthesis; coproporphyrinogen-III from 5-aminolevulinate: step 2/4. Functionally, tetrapolymerization of the monopyrrole PBG into the hydroxymethylbilane pre-uroporphyrinogen in several discrete steps. This is Porphobilinogen deaminase from Pseudomonas aeruginosa (strain UCBPP-PA14).